Here is a 97-residue protein sequence, read N- to C-terminus: Putative defensin-like protein 237 (97 aa).

The signal sequence occupies residues 1-23; the sequence is MRHATSPIVFCFLIFLVMNHVKG. 4 disulfides stabilise this stretch: Cys-30-Cys-94, Cys-40-Cys-71, Cys-48-Cys-84, and Cys-69-Cys-86.

It belongs to the DEFL family.

It localises to the secreted. This is Putative defensin-like protein 237 (SCRL21) from Arabidopsis thaliana (Mouse-ear cress).